A 75-amino-acid chain; its full sequence is MKQLLETIAKSLVDCPDEVQVSEVTGEQSIILELKVAPEDMGKVIGKQGRIAKAIRTVIKAAAVKENKRVVVEII.

One can recognise a KH domain in the interval 29 to 75; the sequence is SIILELKVAPEDMGKVIGKQGRIAKAIRTVIKAAAVKENKRVVVEII.

The protein belongs to the KhpA RNA-binding protein family. Forms a complex with KhpB.

Its subcellular location is the cytoplasm. In terms of biological role, a probable RNA chaperone. Forms a complex with KhpB which binds to cellular RNA and controls its expression. Plays a role in peptidoglycan (PG) homeostasis and cell length regulation. This is RNA-binding protein KhpA from Clostridium acetobutylicum (strain ATCC 824 / DSM 792 / JCM 1419 / IAM 19013 / LMG 5710 / NBRC 13948 / NRRL B-527 / VKM B-1787 / 2291 / W).